A 239-amino-acid chain; its full sequence is Increased recombination centers protein 22-2 (239 aa).

The first 19 residues, 1–19 (MKLSTIFTAFAATIATVAG), serve as a signal peptide directing secretion. The Lumenal segment spans residues 20–161 (YETTGSKQTV…AAVSFFDPRL (142 aa)). A helical membrane pass occupies residues 162–182 (IFLELVLLITFAGLIYVGYEI). The Cytoplasmic segment spans residues 183-239 (WGKQYFKGVAPVKAKKVSAAKASSPVASGPSTTSATGYDTNWIPESHLKQKKTKKVN). Residues 201–213 (AAKASSPVASGPS) show a composition bias toward low complexity. Positions 201 to 222 (AAKASSPVASGPSTTSATGYDT) are disordered.

This sequence belongs to the IRC22 family.

The protein resides in the endoplasmic reticulum membrane. Is probably involved in a pathway contributing to genomic integrity. The sequence is that of Increased recombination centers protein 22-2 (IRC22-2) from Candida albicans (strain WO-1) (Yeast).